The sequence spans 268 residues: Tryptophan synthase alpha chain (268 aa).

Catalysis depends on proton acceptor residues Glu47 and Asp58.

This sequence belongs to the TrpA family. In terms of assembly, tetramer of two alpha and two beta chains.

It catalyses the reaction (1S,2R)-1-C-(indol-3-yl)glycerol 3-phosphate + L-serine = D-glyceraldehyde 3-phosphate + L-tryptophan + H2O. Its pathway is amino-acid biosynthesis; L-tryptophan biosynthesis; L-tryptophan from chorismate: step 5/5. In terms of biological role, the alpha subunit is responsible for the aldol cleavage of indoleglycerol phosphate to indole and glyceraldehyde 3-phosphate. The protein is Tryptophan synthase alpha chain of Chlorobium phaeobacteroides (strain BS1).